A 317-amino-acid polypeptide reads, in one-letter code: Transaldolase (317 aa).

The active-site Schiff-base intermediate with substrate is the lysine 132.

It belongs to the transaldolase family. Type 1 subfamily. In terms of assembly, homodimer.

The protein localises to the cytoplasm. It carries out the reaction D-sedoheptulose 7-phosphate + D-glyceraldehyde 3-phosphate = D-erythrose 4-phosphate + beta-D-fructose 6-phosphate. Its pathway is carbohydrate degradation; pentose phosphate pathway; D-glyceraldehyde 3-phosphate and beta-D-fructose 6-phosphate from D-ribose 5-phosphate and D-xylulose 5-phosphate (non-oxidative stage): step 2/3. Its function is as follows. Transaldolase is important for the balance of metabolites in the pentose-phosphate pathway. The sequence is that of Transaldolase from Actinobacillus succinogenes (strain ATCC 55618 / DSM 22257 / CCUG 43843 / 130Z).